Reading from the N-terminus, the 385-residue chain is GTPase Obg (385 aa).

Residues 1 to 159 (MHFIDQAEIE…RRLRLELKLI (159 aa)) enclose the Obg domain. The region spanning 160–328 (AEVGIVGMPN…LLQRVWQCLG (169 aa)) is the OBG-type G domain. Residues 166–173 (GMPNAGKS), 191–195 (FTTLQ), 213–216 (DIPG), 280–283 (NKID), and 309–311 (SAV) each bind GTP. Residues S173 and T193 each coordinate Mg(2+).

The protein belongs to the TRAFAC class OBG-HflX-like GTPase superfamily. OBG GTPase family. As to quaternary structure, monomer. Requires Mg(2+) as cofactor.

The protein localises to the cytoplasm. Functionally, an essential GTPase which binds GTP, GDP and possibly (p)ppGpp with moderate affinity, with high nucleotide exchange rates and a fairly low GTP hydrolysis rate. Plays a role in control of the cell cycle, stress response, ribosome biogenesis and in those bacteria that undergo differentiation, in morphogenesis control. The chain is GTPase Obg from Synechococcus sp. (strain JA-3-3Ab) (Cyanobacteria bacterium Yellowstone A-Prime).